The following is a 4042-amino-acid chain: Polyketide synthase-nonribosomal peptide synthetase phmA (4042 aa).

In terms of domain architecture, Ketosynthase family 3 (KS3) spans 10 to 411 (NEPIAIVGSA…GANAHAILEA (402 aa)). The tract at residues 519–837 (VFTGQGAQWA…TGLLSRDRDD (319 aa)) is acyl transferase. The segment at 909 to 1042 (HELLGTKCPD…GRISALFGPP (134 aa)) is N-terminal hotdog fold. The tract at residues 909-1208 (HELLGTKCPD…LHTKPLGHAT (300 aa)) is dehydratase (DH) domain. Residues 909–1210 (HELLGTKCPD…TKPLGHATPE (302 aa)) enclose the PKS/mFAS DH domain. Catalysis depends on H941, which acts as the Proton acceptor; for dehydratase activity. The C-terminal hotdog fold stretch occupies residues 1057–1210 (MIDVDPEQFY…TKPLGHATPE (154 aa)). D1117 functions as the Proton donor; for dehydratase activity in the catalytic mechanism. The tract at residues 1349 to 1572 (DDMLNDFYVK…VDEHVEFIRN (224 aa)) is methyltransferase (MT) domain. Residues 2073 to 2246 (TYWLVGLTGG…AGSVINIGAI (174 aa)) form a ketoreductase (KR)domain region. The Carrier 1 domain occupies 2351–2433 (ATTADEVNEA…ELVSAAQEQL (83 aa)). An O-(pantetheine 4'-phosphoryl)serine modification is found at S2393. Disordered stretches follow at residues 2460 to 2504 (KTET…SKDA) and 2535 to 2554 (ATRS…PEND). Acidic residues predominate over residues 2479–2490 (EVDEEEQEEDEA). Positions 2495 to 2504 (NFFSSASKDA) are enriched in polar residues. Residues 2536-2549 (TRSKTSSSSSSFTS) are compositionally biased toward low complexity. Positions 2584-3019 (RVSPMSFGQA…LGRPPLYDPQ (436 aa)) are condensation. Positions 3047–3443 (EMASRFGSQI…TADGLVLEGR (397 aa)) are adenylation. One can recognise a Carrier 2 domain in the interval 3562-3642 (KENKSPESEL…AMLNLISPAS (81 aa)). The residue at position 3602 (S3602) is an O-(pantetheine 4'-phosphoryl)serine. The interval 3703–3924 (ITGASGFLGK…DFVSVESVAH (222 aa)) is reductase-like.

Belongs to the NRP synthetase family.

It participates in mycotoxin biosynthesis. Functionally, hybrid PKS-NRPS synthetase; part of the gene cluster that mediates the biosynthesis of the mycotoxins phomacins, leucine-derived cytochalasans with potent actin polymerization-inhibitory activities and monocot-specific antigerminative activities. The first step in the pathway is catalyzed by the hybrid PKS-NRPS phmA, assisted by the enoyl reductase phmE, that are responsible for fusion of the leucine precursor and the polyketide backbone to produce a 2-pyrrolidone intermediate. The polyketide synthase module (PKS) of phmA is responsible for the synthesis of the polyketide backbone and the downstream nonribosomal peptide synthetase (NRPS) amidates the carboxyl end of the polyketide with the leucine precursor. Because phmA lacks a designated enoylreductase (ER) domain, the required activity is provided the enoyl reductase phmE. Reduction by the hydrolyase phmG, followed by dehydration and intra-molecular Diels-Alder cyclization by the Diels-Alderase phmD then yield the required isoindolone-fused macrocycle. A number of oxidative steps catalyzed by the tailoring cytochrome P450 monooxygenase phmB, the FAD-linked oxidoreductase phmC and the short-chain dehydrogenase/reductase phmF, are further required to afford the final products, phomacin D and phomacin E. In Phaeosphaeria nodorum (strain SN15 / ATCC MYA-4574 / FGSC 10173) (Glume blotch fungus), this protein is Polyketide synthase-nonribosomal peptide synthetase phmA.